The following is a 375-amino-acid chain: DNA replication and repair protein RecF (375 aa).

30–37 (GENAQGKT) contacts ATP.

The protein belongs to the RecF family.

It is found in the cytoplasm. Its function is as follows. The RecF protein is involved in DNA metabolism; it is required for DNA replication and normal SOS inducibility. RecF binds preferentially to single-stranded, linear DNA. It also seems to bind ATP. The sequence is that of DNA replication and repair protein RecF from Enterococcus faecalis (strain ATCC 700802 / V583).